The primary structure comprises 518 residues: Sensor protein kinase HptS (518 aa).

A run of 2 helical transmembrane segments spans residues 20 to 40 and 222 to 242; these read IFPVFLVIIIGLVSFYAIYIW and GITLLIVMAVVLVLLVIFGFI. In terms of domain architecture, Histidine kinase spans 297-513; it reads EQLIHSIEHT…LICYKIPLSR (217 aa). The residue at position 325 (histidine 325) is a Phosphohistidine; by autocatalysis.

Autophosphorylated.

It is found in the cell membrane. It catalyses the reaction ATP + protein L-histidine = ADP + protein N-phospho-L-histidine.. Member of the two-component regulatory system HptS/HptR that regulates genes involved in hexose phosphate transport system in response to changes in extracellular phosphate sources. May act as a sensor protein kinase which is autophosphorylated at a histidine residue and transfers its phosphate group to the conserved aspartic acid residue in the regulatory domain of HptS. In turn, HptS antagonizes CcpA-dependent transcription of a subset of CcpA-regulated genes involved in antibiotic susceptibility. This chain is Sensor protein kinase HptS (hptS), found in Staphylococcus aureus (strain USA300).